We begin with the raw amino-acid sequence, 555 residues long: Adenine deaminase (555 aa).

Belongs to the metallo-dependent hydrolases superfamily. Adenine deaminase family. It depends on Mn(2+) as a cofactor.

The catalysed reaction is adenine + H2O + H(+) = hypoxanthine + NH4(+). The protein is Adenine deaminase of Methanosarcina mazei (strain ATCC BAA-159 / DSM 3647 / Goe1 / Go1 / JCM 11833 / OCM 88) (Methanosarcina frisia).